We begin with the raw amino-acid sequence, 250 residues long: Dihydroorotate dehydrogenase B (NAD(+)), electron transfer subunit (250 aa).

Positions 1–94 constitute an FAD-binding FR-type domain; it reads MKVVAQEEIA…MGPQGNGFDL (94 aa). Residues 45–48, 62–64, and 69–70 contribute to the FAD site; these read RPIS, IYR, and GT. 4 residues coordinate [2Fe-2S] cluster: C214, C219, C222, and C237.

This sequence belongs to the PyrK family. Heterotetramer of 2 PyrK and 2 PyrD type B subunits. It depends on [2Fe-2S] cluster as a cofactor. FAD is required as a cofactor.

The protein operates within pyrimidine metabolism; UMP biosynthesis via de novo pathway; orotate from (S)-dihydroorotate (NAD(+) route): step 1/1. In terms of biological role, responsible for channeling the electrons from the oxidation of dihydroorotate from the FMN redox center in the PyrD type B subunit to the ultimate electron acceptor NAD(+). The protein is Dihydroorotate dehydrogenase B (NAD(+)), electron transfer subunit of Streptococcus pneumoniae serotype 4 (strain ATCC BAA-334 / TIGR4).